Here is a 470-residue protein sequence, read N- to C-terminus: Putative bifunctional phosphatase/peptidyl-prolyl cis-trans isomerase (470 aa).

Catalysis depends on D22, which acts as the Nucleophile. Residues D22, D24, and D221 each coordinate Mg(2+). Residues 286–468 (TGPKVTIKTN…EDVIIETIEV (183 aa)) form the PPIase cyclophilin-type domain.

The protein in the C-terminal section; belongs to the cyclophilin-type PPIase family. PPIL1 subfamily. It depends on Mg(2+) as a cofactor.

It catalyses the reaction [protein]-peptidylproline (omega=180) = [protein]-peptidylproline (omega=0). Functionally, PPIases accelerate the folding of proteins. It catalyzes the cis-trans isomerization of proline imidic peptide bonds in oligopeptides. This is Putative bifunctional phosphatase/peptidyl-prolyl cis-trans isomerase from Streptococcus pyogenes serotype M6 (strain ATCC BAA-946 / MGAS10394).